Consider the following 245-residue polypeptide: uncharacterized protein (245 aa).

The N-terminal stretch at 1 to 27 (MKLKKRVSMFLVALTMCGGLFVTPAKA) is a signal peptide.

This is an uncharacterized protein from Bacillus subtilis (strain 168).